The sequence spans 55 residues: Large ribosomal subunit protein bL33B (55 aa).

This sequence belongs to the bacterial ribosomal protein bL33 family.

This Salinispora tropica (strain ATCC BAA-916 / DSM 44818 / JCM 13857 / NBRC 105044 / CNB-440) protein is Large ribosomal subunit protein bL33B.